The following is a 467-amino-acid chain: Megakaryocyte-associated tyrosine-protein kinase (467 aa).

The tract at residues 1-20 (MPTQRWAPGTQCMTKCENSR) is disordered. The SH3 domain occupies 7 to 69 (APGTQCMTKC…AAAALRQREA (63 aa)). The SH2 domain maps to 81–170 (WFHGKISGQE…AICTKLVKPK (90 aa)). A Protein kinase domain is found at 194–443 (LTLGAQIGEG…IVEKLGRELR (250 aa)). ATP-binding positions include 200–208 (IGEGEFGAV) and K221. D311 acts as the Proton acceptor in catalysis. Positions 445–467 (VGVAAPAGGQEAEGSAPTRSQDP) are disordered.

Belongs to the protein kinase superfamily. Tyr protein kinase family. CSK subfamily. Interacts with KIT. In terms of tissue distribution, enriched in lymphoid tissues.

It is found in the cytoplasm. The protein localises to the membrane. The catalysed reaction is L-tyrosyl-[protein] + ATP = O-phospho-L-tyrosyl-[protein] + ADP + H(+). Functionally, could play a significant role in the signal transduction of hematopoietic cells. May regulate tyrosine kinase activity of SRC-family members in brain. This Rattus norvegicus (Rat) protein is Megakaryocyte-associated tyrosine-protein kinase (Matk).